A 289-amino-acid chain; its full sequence is MAGAKEIRSKIGSVQNTQKITKAMEMVAASKMRKSQERMAASRPYAETMRKVIGHIALGNLEYKHPYLDERDVKRVGYLVVSTDRGLCGGLNINLFKRVLADMKAWADKGVESDLAIIGSKGLSFFSSVGGNVVAQASGMGDKPALSDLIGPVKVMLQAYDEGRIDKLYIVSNKFINTMSQSPQIVQLLPLPPADDAEGVVKKSTWDYLYEPDPKALLDTLLRRYVESQVYQGVVENLASEQAARMVAMKAATDNGGNLIKELQLVYNKARQASITQELTEIVSGASAV.

It belongs to the ATPase gamma chain family. As to quaternary structure, F-type ATPases have 2 components, CF(1) - the catalytic core - and CF(0) - the membrane proton channel. CF(1) has five subunits: alpha(3), beta(3), gamma(1), delta(1), epsilon(1). CF(0) has three main subunits: a, b and c.

The protein resides in the cell inner membrane. Functionally, produces ATP from ADP in the presence of a proton gradient across the membrane. The gamma chain is believed to be important in regulating ATPase activity and the flow of protons through the CF(0) complex. The polypeptide is ATP synthase gamma chain (Erwinia tasmaniensis (strain DSM 17950 / CFBP 7177 / CIP 109463 / NCPPB 4357 / Et1/99)).